Here is a 306-residue protein sequence, read N- to C-terminus: High osmolarity signaling protein MOS1 (306 aa).

The Cytoplasmic segment spans residues 1–23; sequence MEHSRPYGGRKRMSLGNILGDPF. A helical transmembrane segment spans residues 24 to 44; sequence ALATISISLLAWFITFISCVI. Over 45 to 67 the chain is Extracellular; sequence AQVQANKNKGLPDKDNPDGNFPP. The chain crosses the membrane as a helical span at residues 68–88; that stretch reads FAWWAVVYSLFLIVGVVIVVA. Over 89–96 the chain is Cytoplasmic; the sequence is SDAIQTYH. A helical membrane pass occupies residues 97–117; that stretch reads VAVTGYLAGGMVLVTSGVNSL. The Extracellular segment spans residues 118-126; sequence VYSKNGARE. The helical transmembrane segment at 127-147 threads the bilayer; sequence AAAAGFILLSMVVIVWIFYFG. Topologically, residues 148–306 are cytoplasmic; it reads STPSSTPRAF…IAPSNYLILL (159 aa). Positions 204–242 are disordered; that stretch reads FENPSPVGGASQAPTAPTMPTYGNNTMQPNNKSNDEEVL. Residues 224–235 are compositionally biased toward polar residues; the sequence is TYGNNTMQPNNK. The SH3 domain maps to 246 to 306; the sequence is DYPYQAKAIY…IAPSNYLILL (61 aa).

It belongs to the SHO1 family. In terms of assembly, forms homooligomers.

It localises to the cell membrane. In terms of biological role, plasma membrane osmosensor that activates the high osmolarity glycerol (HOG) MAPK signaling pathway in response to high osmolarity. Affects fungal virulence. This Metarhizium robertsii (strain ARSEF 23 / ATCC MYA-3075) (Metarhizium anisopliae (strain ARSEF 23)) protein is High osmolarity signaling protein MOS1 (MOS1).